The primary structure comprises 952 residues: MSDYKDTLNLPETGFPMRGNLANREPEMLKRWYKEDLYGEIRKAKKGKKSFVLHDGPPYANGDIHIGHALNKILKDIIIKSKTLSGFDAPYIPGWDCHGLPIELMVEKKKGKPGQKISAAEFREECRKYAAGQVEGQKESFKRLGIMGEWDKPYRTMDFGTEANIIRSLGKIADKGHLLKGFKPVHWCTDCGSALAEAEVEYKDKVSPSIDVKFTAADEAALLEKFTLAEGHAGQGEISIVIWTTTPWTLPANRAVCLRDDLEYVLIQVEANGDQPAQRIVVASELAKDVMDRAGIEHFHNLGFATGADLELSQFNHPFYNFTVPAVLGDHVTTDSGTGVVHTAPGHGQEDFVVGKKYNLEIANPVGSNGVYLPDTELFAGQHVFKANDSVLEVLKEKGALLHHHAYEHSYPHCWRHKTPIIFRATPQWFISMDQAGLRAKALESTKSVEWMPEWGQSRIEGMIEGRPEWCISRQRTWGVPIALFVHKETSELHPDSPALIEKVAKLVEEKGIQAWWDVDAAELMGAEDADKYEKVLDTLDVWFDSGVTHFSVVDSREEYNFPNEERTHSADLYLEGSDQHRGWFQSSLISSIAMKDEAPYKQVLTHGFVVDGNGRKMSKSIGNVVAPKDVTNKLGADILRLWVASTDYTNEVAVSDEILKRSADAYRRIRNTARFFLANLNGFNPETDLVPAEEMVALDRWAVGRAQAAQEEIVKAYGEYNTHGVTQRLMQFCSIEMGSFYLDVIKDRQYTAKQGSHAQRSCQTALYYIVEALVRWMAPIMSFTADEIWNEMPGERDTFVFTGEWFEGLFGLADDEELSNEFWTEIQSVRGAVNKLLEDARKEKTIGGALQAEVTLYADDALAAKINKLEDELRFVLITSAAVVKPLSDKSDTAQATDVEGLYVEVAATEAEKCDRCWHHTPDVGTIEGHEKICGRCVSNIDGEGEVRKFA.

The 'HIGH' region signature appears at 58–68 (PYANGDIHIGH). An L-isoleucyl-5'-AMP-binding site is contributed by glutamate 576. Residues 617–621 (KMSKS) carry the 'KMSKS' region motif. Position 620 (lysine 620) interacts with ATP. Positions 915, 918, 935, and 938 each coordinate Zn(2+).

Belongs to the class-I aminoacyl-tRNA synthetase family. IleS type 1 subfamily. In terms of assembly, monomer. Zn(2+) serves as cofactor.

It localises to the cytoplasm. It carries out the reaction tRNA(Ile) + L-isoleucine + ATP = L-isoleucyl-tRNA(Ile) + AMP + diphosphate. Its function is as follows. Catalyzes the attachment of isoleucine to tRNA(Ile). As IleRS can inadvertently accommodate and process structurally similar amino acids such as valine, to avoid such errors it has two additional distinct tRNA(Ile)-dependent editing activities. One activity is designated as 'pretransfer' editing and involves the hydrolysis of activated Val-AMP. The other activity is designated 'posttransfer' editing and involves deacylation of mischarged Val-tRNA(Ile). This is Isoleucine--tRNA ligase from Vibrio atlanticus (strain LGP32) (Vibrio splendidus (strain Mel32)).